The following is a 776-amino-acid chain: 1,4-alpha-glucan branching enzyme GlgB (776 aa).

The active-site Nucleophile is the Asp-431. The active-site Proton donor is Glu-484.

The protein belongs to the glycosyl hydrolase 13 family. GlgB subfamily. Monomer.

It carries out the reaction Transfers a segment of a (1-&gt;4)-alpha-D-glucan chain to a primary hydroxy group in a similar glucan chain.. It participates in glycan biosynthesis; glycogen biosynthesis. Its function is as follows. Catalyzes the formation of the alpha-1,6-glucosidic linkages in glycogen by scission of a 1,4-alpha-linked oligosaccharide from growing alpha-1,4-glucan chains and the subsequent attachment of the oligosaccharide to the alpha-1,6 position. This is 1,4-alpha-glucan branching enzyme GlgB from Trichodesmium erythraeum (strain IMS101).